A 236-amino-acid chain; its full sequence is 2,3,4,5-tetrahydropyridine-2,6-dicarboxylate N-acetyltransferase (236 aa).

The protein belongs to the transferase hexapeptide repeat family. DapH subfamily.

It catalyses the reaction (S)-2,3,4,5-tetrahydrodipicolinate + acetyl-CoA + H2O = L-2-acetamido-6-oxoheptanedioate + CoA. Its pathway is amino-acid biosynthesis; L-lysine biosynthesis via DAP pathway; LL-2,6-diaminopimelate from (S)-tetrahydrodipicolinate (acetylase route): step 1/3. Catalyzes the transfer of an acetyl group from acetyl-CoA to tetrahydrodipicolinate. This is 2,3,4,5-tetrahydropyridine-2,6-dicarboxylate N-acetyltransferase from Bacillus licheniformis (strain ATCC 14580 / DSM 13 / JCM 2505 / CCUG 7422 / NBRC 12200 / NCIMB 9375 / NCTC 10341 / NRRL NRS-1264 / Gibson 46).